The chain runs to 153 residues: Ribosomal RNA large subunit methyltransferase H (153 aa).

S-adenosyl-L-methionine is bound by residues Leu71 and Gly102.

This sequence belongs to the RNA methyltransferase RlmH family. Homodimer.

The protein localises to the cytoplasm. It catalyses the reaction pseudouridine(1915) in 23S rRNA + S-adenosyl-L-methionine = N(3)-methylpseudouridine(1915) in 23S rRNA + S-adenosyl-L-homocysteine + H(+). Functionally, specifically methylates the pseudouridine at position 1915 (m3Psi1915) in 23S rRNA. This Anaeromyxobacter dehalogenans (strain 2CP-1 / ATCC BAA-258) protein is Ribosomal RNA large subunit methyltransferase H.